Here is a 60-residue protein sequence, read N- to C-terminus: MKNTILILFTAFIALLGFFGMSAEALADLKADPLAGPNPDADPEAINLKAIAALAKKLLG.

Positions 1–25 (MKNTILILFTAFIALLGFFGMSAEA) are cleaved as a signal peptide. Residues 26-45 (LADLKADPLAGPNPDADPEA) constitute a propeptide that is removed on maturation. 3 AXPX repeats span residues 31 to 34 (ADPL), 35 to 38 (AGPN), and 41 to 44 (ADPE). Position 59 is a leucine amide (Leu-59).

Belongs to the MCD family. Mastoparan subfamily. In terms of tissue distribution, expressed by the venom gland.

It is found in the secreted. Functionally, antimicrobial peptide with activities against Gram-negative and Gram-positive bacteria and the fungi C.albicans and C.parapsilosis. Exhibits little hemolytic activity against washed human erythrocytes. Also acts as a mast cell degranulating peptide. Its mast cell degranulation activity may be related to the activation of G-protein coupled receptors in mast cells as well as interaction with other proteins located in cell endosomal membranes in the mast cells. Its function is as follows. Antimicrobial peptide with activities against Gram-negative and Gram-positive bacteria and the fungi C.albicans and C.parapsilosis. Exhibits little hemolytic activity against washed human erythrocytes. Also acts as a mast cell degranulating peptide. This chain is Mastoparan-VT1, found in Vespa tropica (Greater banded hornet).